The following is a 282-amino-acid chain: NADPH-dependent 7-cyano-7-deazaguanine reductase (282 aa).

82 to 84 provides a ligand contact to substrate; the sequence is IES. 84–85 is a binding site for NADPH; that stretch reads SK. The Thioimide intermediate role is filled by Cys-189. Asp-196 acts as the Proton donor in catalysis. 228–229 lines the substrate pocket; sequence HE. NADPH is bound at residue 257-258; that stretch reads RG.

Belongs to the GTP cyclohydrolase I family. QueF type 2 subfamily. As to quaternary structure, homodimer.

The protein resides in the cytoplasm. It catalyses the reaction 7-aminomethyl-7-carbaguanine + 2 NADP(+) = 7-cyano-7-deazaguanine + 2 NADPH + 3 H(+). It functions in the pathway tRNA modification; tRNA-queuosine biosynthesis. Catalyzes the NADPH-dependent reduction of 7-cyano-7-deazaguanine (preQ0) to 7-aminomethyl-7-deazaguanine (preQ1). This chain is NADPH-dependent 7-cyano-7-deazaguanine reductase, found in Delftia acidovorans (strain DSM 14801 / SPH-1).